Reading from the N-terminus, the 348-residue chain is Heat-inducible transcription repressor HrcA (348 aa).

It belongs to the HrcA family.

In terms of biological role, negative regulator of class I heat shock genes (grpE-dnaK-dnaJ and groELS operons). Prevents heat-shock induction of these operons. The sequence is that of Heat-inducible transcription repressor HrcA from Ruminiclostridium cellulolyticum (strain ATCC 35319 / DSM 5812 / JCM 6584 / H10) (Clostridium cellulolyticum).